The following is a 44-amino-acid chain: Large ribosomal subunit protein bL34 (44 aa).

The segment at 21 to 44 (RMDTSGGRRILSARRRKGRKTISA) is disordered. Basic residues predominate over residues 31 to 44 (LSARRRKGRKTISA).

The protein belongs to the bacterial ribosomal protein bL34 family.

This is Large ribosomal subunit protein bL34 from Endomicrobium trichonymphae.